A 161-amino-acid chain; its full sequence is Large ribosomal subunit protein uL11 (161 aa).

This sequence belongs to the universal ribosomal protein uL11 family. Part of the ribosomal stalk of the 50S ribosomal subunit. Interacts with L10 and the large rRNA to form the base of the stalk. L10 forms an elongated spine to which L12 dimers bind in a sequential fashion forming a multimeric L10(L12)X complex.

Forms part of the ribosomal stalk which helps the ribosome interact with GTP-bound translation factors. This is Large ribosomal subunit protein uL11 from Methanococcoides burtonii (strain DSM 6242 / NBRC 107633 / OCM 468 / ACE-M).